We begin with the raw amino-acid sequence, 671 residues long: Probable ATP-dependent RNA helicase ddx41 (671 aa).

Coiled-coil stretches lie at residues 19–43 (IPLKERKLNQIKSKLNNLKQQQPQQ) and 100–154 (LDQK…DMEE). 2 stretches are compositionally biased toward low complexity: residues 33-83 (LNNL…NNDN) and 125-139 (IENDVNSSNNNNNNG). Disordered stretches follow at residues 33–88 (LNNL…FEDE) and 125–148 (IENDVNSSNNNNNNGEENKIKEEK). A Q motif motif is present at residues 222–250 (TTFKEMKIPKPVIDVLLEKGIKKPSPIQV). A Helicase ATP-binding domain is found at 253 to 438 (LPVILSGRDM…RSALVLPVEV (186 aa)). 266–273 (AYTGSGKT) contributes to the ATP binding site. A DEAD box motif is present at residues 386–389 (DEAD). The 161-residue stretch at 449 to 609 (NVTQEVEFVK…KVPPALLEIP (161 aa)) folds into the Helicase C-terminal domain. The tract at residues 617-636 (KLQDRNGNTGGGADDDDTKP) is disordered. A CCHC-type zinc finger spans residues 635-652 (KPCEYCDGRGHRLVNCPK).

It belongs to the DEAD box helicase family. DDX41 subfamily.

Its subcellular location is the nucleus. The enzyme catalyses ATP + H2O = ADP + phosphate + H(+). In Dictyostelium discoideum (Social amoeba), this protein is Probable ATP-dependent RNA helicase ddx41 (ddx41).